The primary structure comprises 231 residues: Ribosyldihydronicotinamide dehydrogenase [quinone] (231 aa).

Residues histidine 12 and 18-21 contribute to the FAD site; that span reads FNGS. The residue at position 80 (serine 80) is a Phosphoserine. 104 to 107 provides a ligand contact to FAD; it reads LYWF. 127 to 129 contributes to the substrate binding site; the sequence is FDI. FAD-binding positions include 148-151 and tyrosine 156; that span reads TTGG. Residues histidine 174 and histidine 178 each coordinate Zn(2+). Glutamate 194 contributes to the FAD binding site. The residue at position 197 (serine 197) is a Phosphoserine. FAD is bound at residue arginine 201. Cysteine 223 provides a ligand contact to Zn(2+).

It belongs to the NAD(P)H dehydrogenase (quinone) family. In terms of assembly, homodimer. The cofactor is Zn(2+). FAD is required as a cofactor.

It is found in the cytoplasm. It carries out the reaction 1-(beta-D-ribofuranosyl)-1,4-dihydronicotinamide + a quinone + H(+) = beta-nicotinamide D-riboside + a quinol. Its function is as follows. The enzyme apparently serves as a quinone reductase in connection with conjugation reactions of hydroquinones involved in detoxification pathways as well as in biosynthetic processes such as the vitamin K-dependent gamma-carboxylation of glutamate residues in prothrombin synthesis. The sequence is that of Ribosyldihydronicotinamide dehydrogenase [quinone] (NQO2) from Pongo abelii (Sumatran orangutan).